The following is a 303-amino-acid chain: MSVWAFAFFSLFLSLSVRGSAEQCGQQAGDALCPGGLCCSSYGWCGTTADYCGDGCQSQCDGGGGGGGGGGGGGGGGGGGGDGYLSDIIPESMFDDMLKYRNDPQCPAVGFYTYNAFISAAKEFPDFGNTGDDLMRKREIAAFLGQTSHETNGWWPAAQGDQYDWGYCHMNYNYGLCGDDLNLPLLQEPELVETDPFIAFKTALWFWMTPQSPKPSCHAVITESWTPSAADSEAGRVPGYGVITNIINGGIECGQGGPNNANENRIGFYKTYCDSLGTTYGSNLDCYQQRPFGYGLLGLKDTM.

The first 21 residues, 1-21 (MSVWAFAFFSLFLSLSVRGSA), serve as a signal peptide directing secretion. The Chitin-binding type-1 domain occupies 22 to 62 (EQCGQQAGDALCPGGLCCSSYGWCGTTADYCGDGCQSQCDG). Intrachain disulfides connect Cys24–Cys39, Cys33–Cys45, Cys38–Cys52, and Cys56–Cys60. The tract at residues 82–303 (DGYLSDIIPE…YGLLGLKDTM (222 aa)) is chitinase. Glu150 functions as the Proton donor in the catalytic mechanism. Cys253 and Cys286 are disulfide-bonded.

It belongs to the glycosyl hydrolase 19 family. Chitinase class I subfamily.

The catalysed reaction is Random endo-hydrolysis of N-acetyl-beta-D-glucosaminide (1-&gt;4)-beta-linkages in chitin and chitodextrins.. Functionally, defense against chitin-containing fungal pathogens. This Populus trichocarpa (Western balsam poplar) protein is Acidic endochitinase WIN6.2B.